Consider the following 367-residue polypeptide: Phospho-N-acetylmuramoyl-pentapeptide-transferase (367 aa).

Helical transmembrane passes span L16 to F36, T62 to V82, M87 to L107, F125 to Y145, V158 to I178, S190 to A210, L214 to Y234, Q240 to L260, Q264 to I284, and F326 to S346.

This sequence belongs to the glycosyltransferase 4 family. MraY subfamily. Mg(2+) is required as a cofactor.

The protein resides in the cell membrane. It carries out the reaction UDP-N-acetyl-alpha-D-muramoyl-L-alanyl-gamma-D-glutamyl-meso-2,6-diaminopimeloyl-D-alanyl-D-alanine + di-trans,octa-cis-undecaprenyl phosphate = di-trans,octa-cis-undecaprenyl diphospho-N-acetyl-alpha-D-muramoyl-L-alanyl-D-glutamyl-meso-2,6-diaminopimeloyl-D-alanyl-D-alanine + UMP. The protein operates within cell wall biogenesis; peptidoglycan biosynthesis. Catalyzes the initial step of the lipid cycle reactions in the biosynthesis of the cell wall peptidoglycan: transfers peptidoglycan precursor phospho-MurNAc-pentapeptide from UDP-MurNAc-pentapeptide onto the lipid carrier undecaprenyl phosphate, yielding undecaprenyl-pyrophosphoryl-MurNAc-pentapeptide, known as lipid I. This Chloroflexus aggregans (strain MD-66 / DSM 9485) protein is Phospho-N-acetylmuramoyl-pentapeptide-transferase.